Consider the following 387-residue polypeptide: Sulfoacetaldehyde reductase (387 aa).

This sequence belongs to the iron-containing alcohol dehydrogenase family.

The catalysed reaction is 2-hydroxyethane-1-sulfonate + NAD(+) = sulfoacetaldehyde + NADH + H(+). The protein operates within organosulfur degradation; alkanesulfonate degradation. Functionally, involved in an anaerobic respiration pathway that converts the sulfonate taurine (2-aminoethanesulfonate) to ammonia, acetate and sulfide. Catalyzes the NADH-dependent reduction of sulfoacetaldehyde to 2-hydroxyethane-1-sulfonate (isethionate). Does not accept acetaldehyde as a substrate. The protein is Sulfoacetaldehyde reductase of Bilophila wadsworthia (strain 3_1_6).